The chain runs to 342 residues: MSEAIKTDVLIIGAGPCGLFAVFELGLLDMKVHLVDILDKIGGQCAELYPEKPIYDIPGIPLVTGQGLTEALLEQIKPFNPTFHLNEMVESIEKIGDPGFRVTTDAGQVFECKVVVVSAGGGSFQPKRPPVPGIEAYENISVFYAVRKMEQFRDKEILIVGGGDSALDWTLNLHPLAKRITLLHRRDEFRAAPHSVEQMRKLVADGTMDLKIGQVTALEGADGKLTGAQVKGSDNTTSTVSCDTMLPFFGLTMKLGPVANWGLHLENNLIPVETASFETNVPGIFAIGDINTYPGKLKLILSGFHEGALMAQKAHRYVYPDKRLVFQYTTSSSSLQKKLGVN.

Residues Cys17, Asp36, Gln44, Tyr49, Val89, Phe124, Asp289, and Thr330 each contribute to the FAD site.

It belongs to the ferredoxin--NADP reductase type 2 family. As to quaternary structure, homodimer. FAD is required as a cofactor.

It carries out the reaction 2 reduced [2Fe-2S]-[ferredoxin] + NADP(+) + H(+) = 2 oxidized [2Fe-2S]-[ferredoxin] + NADPH. This Nitrobacter winogradskyi (strain ATCC 25391 / DSM 10237 / CIP 104748 / NCIMB 11846 / Nb-255) protein is Ferredoxin--NADP reductase.